The primary structure comprises 499 residues: Inosine-5'-monophosphate dehydrogenase (499 aa).

CBS domains are found at residues 106–165 (IDRE…SDAV) and 169–225 (MTDE…GSAA). NAD(+) is bound by residues Asp260 and 308-310 (GIG). K(+)-binding residues include Gly310 and Gly312. IMP is bound at residue Ser313. A K(+)-binding site is contributed by Cys315. The active-site Thioimidate intermediate is Cys315. IMP contacts are provided by residues 348–350 (DGG), 371–372 (GS), and 395–399 (YRGMG). The active-site Proton acceptor is Arg411. Glu425 contacts IMP. Residues Glu479, Gly480, and His481 each contribute to the K(+) site. Residues 480-499 (GHPHDVMITDEAPNYSPQGE) are disordered.

The protein belongs to the IMPDH/GMPR family. In terms of assembly, homotetramer. K(+) is required as a cofactor.

The enzyme catalyses IMP + NAD(+) + H2O = XMP + NADH + H(+). It participates in purine metabolism; XMP biosynthesis via de novo pathway; XMP from IMP: step 1/1. With respect to regulation, mycophenolic acid (MPA) is a non-competitive inhibitor that prevents formation of the closed enzyme conformation by binding to the same site as the amobile flap. In contrast, mizoribine monophosphate (MZP) is a competitive inhibitor that induces the closed conformation. MPA is a potent inhibitor of mammalian IMPDHs but a poor inhibitor of the bacterial enzymes. MZP is a more potent inhibitor of bacterial IMPDH. Functionally, catalyzes the conversion of inosine 5'-phosphate (IMP) to xanthosine 5'-phosphate (XMP), the first committed and rate-limiting step in the de novo synthesis of guanine nucleotides, and therefore plays an important role in the regulation of cell growth. The sequence is that of Inosine-5'-monophosphate dehydrogenase from Halobacterium salinarum (strain ATCC 700922 / JCM 11081 / NRC-1) (Halobacterium halobium).